The sequence spans 354 residues: Ribosomal RNA large subunit methyltransferase M (354 aa).

S-adenosyl-L-methionine contacts are provided by residues Ser-183, 216 to 219 (SPGG), Asp-235, Asp-255, and Asp-271. Catalysis depends on Lys-300, which acts as the Proton acceptor.

This sequence belongs to the class I-like SAM-binding methyltransferase superfamily. RNA methyltransferase RlmE family. RlmM subfamily. As to quaternary structure, monomer.

The protein localises to the cytoplasm. It catalyses the reaction cytidine(2498) in 23S rRNA + S-adenosyl-L-methionine = 2'-O-methylcytidine(2498) in 23S rRNA + S-adenosyl-L-homocysteine + H(+). In terms of biological role, catalyzes the 2'-O-methylation at nucleotide C2498 in 23S rRNA. The protein is Ribosomal RNA large subunit methyltransferase M of Pseudomonas entomophila (strain L48).